The following is a 220-amino-acid chain: Large ribosomal subunit protein uL3 (220 aa).

The interval 145 to 169 (GPASHGSKFHRRPGSSGNRTWPGRV) is disordered.

This sequence belongs to the universal ribosomal protein uL3 family. As to quaternary structure, part of the 50S ribosomal subunit. Forms a cluster with proteins L14 and L19.

One of the primary rRNA binding proteins, it binds directly near the 3'-end of the 23S rRNA, where it nucleates assembly of the 50S subunit. The sequence is that of Large ribosomal subunit protein uL3 from Bdellovibrio bacteriovorus (strain ATCC 15356 / DSM 50701 / NCIMB 9529 / HD100).